A 478-amino-acid chain; its full sequence is 3-isopropylmalate dehydratase large subunit (478 aa).

[4Fe-4S] cluster contacts are provided by Cys-347, Cys-407, and Cys-410.

It belongs to the aconitase/IPM isomerase family. LeuC type 1 subfamily. Heterodimer of LeuC and LeuD. The cofactor is [4Fe-4S] cluster.

The enzyme catalyses (2R,3S)-3-isopropylmalate = (2S)-2-isopropylmalate. Its pathway is amino-acid biosynthesis; L-leucine biosynthesis; L-leucine from 3-methyl-2-oxobutanoate: step 2/4. In terms of biological role, catalyzes the isomerization between 2-isopropylmalate and 3-isopropylmalate, via the formation of 2-isopropylmaleate. In Prochlorococcus marinus (strain MIT 9313), this protein is 3-isopropylmalate dehydratase large subunit.